We begin with the raw amino-acid sequence, 442 residues long: NADH-quinone oxidoreductase subunit D (442 aa).

Belongs to the complex I 49 kDa subunit family. In terms of assembly, NDH-1 is composed of 14 different subunits. Subunits NuoB, C, D, E, F, and G constitute the peripheral sector of the complex.

The protein localises to the cell membrane. The enzyme catalyses a quinone + NADH + 5 H(+)(in) = a quinol + NAD(+) + 4 H(+)(out). Its function is as follows. NDH-1 shuttles electrons from NADH, via FMN and iron-sulfur (Fe-S) centers, to quinones in the respiratory chain. The immediate electron acceptor for the enzyme in this species is believed to be a menaquinone. Couples the redox reaction to proton translocation (for every two electrons transferred, four hydrogen ions are translocated across the cytoplasmic membrane), and thus conserves the redox energy in a proton gradient. This chain is NADH-quinone oxidoreductase subunit D, found in Mycolicibacterium vanbaalenii (strain DSM 7251 / JCM 13017 / BCRC 16820 / KCTC 9966 / NRRL B-24157 / PYR-1) (Mycobacterium vanbaalenii).